Here is a 173-residue protein sequence, read N- to C-terminus: Shikimate kinase (173 aa).

11–16 (GAGKTT) is an ATP binding site. A Mg(2+)-binding site is contributed by T15. Substrate is bound by residues D33, R57, and G79. R118 provides a ligand contact to ATP. A substrate-binding site is contributed by R140.

Belongs to the shikimate kinase family. As to quaternary structure, monomer. Mg(2+) serves as cofactor.

It is found in the cytoplasm. The enzyme catalyses shikimate + ATP = 3-phosphoshikimate + ADP + H(+). Its pathway is metabolic intermediate biosynthesis; chorismate biosynthesis; chorismate from D-erythrose 4-phosphate and phosphoenolpyruvate: step 5/7. Its function is as follows. Catalyzes the specific phosphorylation of the 3-hydroxyl group of shikimic acid using ATP as a cosubstrate. The polypeptide is Shikimate kinase (Parabacteroides distasonis (strain ATCC 8503 / DSM 20701 / CIP 104284 / JCM 5825 / NCTC 11152)).